A 318-amino-acid chain; its full sequence is Acetaldehyde dehydrogenase 1 (318 aa).

15-18 (SGNI) lines the NAD(+) pocket. The Acyl-thioester intermediate role is filled by Cys133. NAD(+)-binding positions include 164–172 (SAGPGTRAN) and Asn289.

It belongs to the acetaldehyde dehydrogenase family.

The catalysed reaction is acetaldehyde + NAD(+) + CoA = acetyl-CoA + NADH + H(+). The protein is Acetaldehyde dehydrogenase 1 (xylQ) of Azotobacter vinelandii (strain DJ / ATCC BAA-1303).